We begin with the raw amino-acid sequence, 540 residues long: Peptide chain release factor 3 (540 aa).

Positions 14-283 (ELRRNFAIIS…YFLNYALKPG (270 aa)) constitute a tr-type G domain. Residues 23–30 (SHPDAGKT), 91–95 (DTPGH), and 145–148 (NKLD) each bind GTP.

It belongs to the TRAFAC class translation factor GTPase superfamily. Classic translation factor GTPase family. PrfC subfamily.

It is found in the cytoplasm. In terms of biological role, increases the formation of ribosomal termination complexes and stimulates activities of RF-1 and RF-2. It binds guanine nucleotides and has strong preference for UGA stop codons. It may interact directly with the ribosome. The stimulation of RF-1 and RF-2 is significantly reduced by GTP and GDP, but not by GMP. The polypeptide is Peptide chain release factor 3 (Trichormus variabilis (strain ATCC 29413 / PCC 7937) (Anabaena variabilis)).